The sequence spans 631 residues: MGIQILPPQLANQIAAGEVVERPASVVKELVENSLDAGASRIDIEIDKGGSKLIKIRDNGSGIPKEELALALSRHATSKLHSLDDLEAILSFGFRGEALASISSVSRLTLTSRTAEQSEAWQAYAEGVEMAVKVMPAAHPVGSTIEVVDLFFNTPARRRFLKSDKTEFTHIDEWLKRIALVRGDIHFTLTHNGKTVRNYRPAMNEPQYLQRLTQVAGRPFADEALRVECQHDDLRLSGYLQSPWSTVLTDTHYFYVNGRLVRDRLVNHAVRQAFAQKAEVEQPGYVLMLDIDPHQVDVNVHPAKHEVRFHQSRYVHDYILQALQSALEEAGELRFEPHSPQIDDSSPYVKPETESSAFELQSTESNAKYLGIDTTGERQAEARVVEYRSSDMPKMRTGTAVQSNAFGSMSVPRETRSGSSGESRPRAELPSKTAIASYGALLQTPSYSVQDKAYQPTLPMPSILDGQFWVFTDGPKLSLLRIESVALATRSDEIETKLATGLIGQPLLMPVSVAADTDWSSLLDEHATLIRQLGLELTIRYQQLIIKKVPPYLRDCQLARVIPEWLQSLRFEAPAPNALAIWLAEQSLTGFISAPDVWVAYCQLTEEKRQQIASKAVSLPWQSWLEEQAIE.

2 disordered regions span residues 337 to 362 and 400 to 429; these read PHSP…ELQS and AVQS…RAEL.

The protein belongs to the DNA mismatch repair MutL/HexB family.

Its function is as follows. This protein is involved in the repair of mismatches in DNA. It is required for dam-dependent methyl-directed DNA mismatch repair. May act as a 'molecular matchmaker', a protein that promotes the formation of a stable complex between two or more DNA-binding proteins in an ATP-dependent manner without itself being part of a final effector complex. The chain is DNA mismatch repair protein MutL from Shewanella oneidensis (strain ATCC 700550 / JCM 31522 / CIP 106686 / LMG 19005 / NCIMB 14063 / MR-1).